Consider the following 227-residue polypeptide: MAYPFQLGLXDATSPIMEELLHFHDHTLMIVFLISSLVLYIITLMLTTKLTHTSTMDAQEVETVWTILPAIILILIALPSLRILYMMDEINNPSLTVKTMGHQWYWSYEYTDYEDLNFDSYMIPTQELKPGELRLLEVDNRVVLPMEMTVRMLISSEDVLHSWAVPSLGLKTDAIPGRLNQTTLMAMRPGLYYGQCSEICGSNHSFMPIVLEMVPLSYFETWSAVMV.

Residues 1–14 lie on the Mitochondrial intermembrane side of the membrane; it reads MAYPFQLGLXDATS. The helical transmembrane segment at 15-45 threads the bilayer; that stretch reads PIMEELLHFHDHTLMIVFLISSLVLYIITLM. The Mitochondrial matrix portion of the chain corresponds to 46–59; it reads LTTKLTHTSTMDAQ. The helical transmembrane segment at 60–87 threads the bilayer; it reads EVETVWTILPAIILILIALPSLRILYMM. The Mitochondrial intermembrane segment spans residues 88-227; that stretch reads DEINNPSLTV…YFETWSAVMV (140 aa). 6 residues coordinate Cu cation: H161, C196, E198, C200, H204, and M207. E198 contributes to the Mg(2+) binding site.

This sequence belongs to the cytochrome c oxidase subunit 2 family. Component of the cytochrome c oxidase (complex IV, CIV), a multisubunit enzyme composed of 14 subunits. The complex is composed of a catalytic core of 3 subunits MT-CO1, MT-CO2 and MT-CO3, encoded in the mitochondrial DNA, and 11 supernumerary subunits COX4I, COX5A, COX5B, COX6A, COX6B, COX6C, COX7A, COX7B, COX7C, COX8 and NDUFA4, which are encoded in the nuclear genome. The complex exists as a monomer or a dimer and forms supercomplexes (SCs) in the inner mitochondrial membrane with NADH-ubiquinone oxidoreductase (complex I, CI) and ubiquinol-cytochrome c oxidoreductase (cytochrome b-c1 complex, complex III, CIII), resulting in different assemblies (supercomplex SCI(1)III(2)IV(1) and megacomplex MCI(2)III(2)IV(2)). Found in a complex with TMEM177, COA6, COX18, COX20, SCO1 and SCO2. Interacts with TMEM177 in a COX20-dependent manner. Interacts with COX20. Interacts with COX16. Cu cation serves as cofactor.

Its subcellular location is the mitochondrion inner membrane. The enzyme catalyses 4 Fe(II)-[cytochrome c] + O2 + 8 H(+)(in) = 4 Fe(III)-[cytochrome c] + 2 H2O + 4 H(+)(out). In terms of biological role, component of the cytochrome c oxidase, the last enzyme in the mitochondrial electron transport chain which drives oxidative phosphorylation. The respiratory chain contains 3 multisubunit complexes succinate dehydrogenase (complex II, CII), ubiquinol-cytochrome c oxidoreductase (cytochrome b-c1 complex, complex III, CIII) and cytochrome c oxidase (complex IV, CIV), that cooperate to transfer electrons derived from NADH and succinate to molecular oxygen, creating an electrochemical gradient over the inner membrane that drives transmembrane transport and the ATP synthase. Cytochrome c oxidase is the component of the respiratory chain that catalyzes the reduction of oxygen to water. Electrons originating from reduced cytochrome c in the intermembrane space (IMS) are transferred via the dinuclear copper A center (CU(A)) of subunit 2 and heme A of subunit 1 to the active site in subunit 1, a binuclear center (BNC) formed by heme A3 and copper B (CU(B)). The BNC reduces molecular oxygen to 2 water molecules using 4 electrons from cytochrome c in the IMS and 4 protons from the mitochondrial matrix. In Vulpes corsac (Corsac fox), this protein is Cytochrome c oxidase subunit 2 (MT-CO2).